Here is a 504-residue protein sequence, read N- to C-terminus: TGF-beta-activated kinase 1 and MAP3K7-binding protein 1 (504 aa).

The disordered stretch occupies residues 1–22 (MAAQRRSLLQSEQQPSWTDDLP). Ser-7 carries the phosphoserine modification. Positions 7–17 (SLLQSEQQPSW) are enriched in polar residues. Residues 28 to 365 (GVGSASNRSY…EDMTLLVRNF (338 aa)) form the PPM-type phosphatase domain. A Phosphoserine modification is found at Ser-378. Residue Ser-395 is glycosylated (O-linked (GlcNAc) serine). A Phosphoserine; by MAPK14 modification is found at Ser-423. Positions 430–439 (ATPTLTNQSP) are enriched in polar residues. The segment at 430–478 (ATPTLTNQSPTLTLQSTNTHTQSSSSSSDGGLFRSRPAHSLPPGEDGRV) is disordered. At Thr-431 the chain carries Phosphothreonine; by MAPK14. Ser-438 carries the post-translational modification Phosphoserine; by MAPK14. The span at 440–457 (TLTLQSTNTHTQSSSSSS) shows a compositional bias: low complexity. Thr-442 carries the post-translational modification Phosphothreonine.

Interacts with XIAP and BIRC7. Interacts with TRAF6 and MAP3K7; during IL-1 signaling. Identified in the TRIKA2 complex composed of MAP3K7, TAB1 and TAB2. Interacts with TRAF6 and MAPK14; these interactions allow MAPK14 autophosphorylation. Interacts with STING1; interaction takes place following cGAMP activation and promotes TAB1 recruitment to the endoplasmic reticulum, triggering MAP3K7/TAK1 activation and STING1 phosphorylation. Phosphorylated at all three sites Ser-423, Thr-431 and Ser-438 by MAPK14 when cells were exposed to cellular stresses, or stimulated with TNF-alpha, IL1 or LPS. These phosphorylations inhibit TAK1 activation by a feedback control mechanism. Dephosphorylated by DUSP14 at Ser-438, leading to TAB1-MAP3K7/TAK1 complex inactivation in T-cells. In terms of processing, ubiquitinated by MAP3K1 with 'Lys-63'-linked polyubiquitin; leading to activation of TAK1 and of JNK and p38 MAP kinases following EGF and TGF-beta stimulation. Ubiquitinated by ITCH with 'Lys-48'-linked polyubiquitin; leading to proteasomal degradation. Ubiquitinated by RNF114 during maternal-to-zygotic transition; leading to degradation. Post-translationally, (Microbial infection) Deubiquitinated by Y.enterocolitica YopP. O-GlcNAcylated at Ser-395 by OGT is required for full MAP3K7/TAK1 activation upon stimulation with IL-1 or osmotic stress. Deglycosylated at Ser-395 by OGA. Ubiquitous.

Its subcellular location is the cytoplasm. The protein resides in the cytosol. It is found in the endoplasmic reticulum membrane. In terms of biological role, key adapter protein that plays an essential role in JNK and NF-kappa-B activation and proinflammatory cytokines production in response to stimulation with TLRs and cytokines. Mechanistically, associates with the catalytic domain of MAP3K7/TAK1 to trigger MAP3K7/TAK1 autophosphorylation leading to its full activation. Similarly, associates with MAPK14 and triggers its autophosphorylation and subsequent activation. In turn, MAPK14 phosphorylates TAB1 and inhibits MAP3K7/TAK1 activation in a feedback control mechanism. Also plays a role in recruiting MAPK14 to the TAK1 complex for the phosphorylation of the TAB2 and TAB3 regulatory subunits. The chain is TGF-beta-activated kinase 1 and MAP3K7-binding protein 1 (TAB1) from Homo sapiens (Human).